The primary structure comprises 596 residues: Elongation factor 4 (596 aa).

The 182-residue stretch at 2–183 (ENIRNFSIIA…AIIERIPAPS (182 aa)) folds into the tr-type G domain. GTP contacts are provided by residues 14 to 19 (DHGKST) and 130 to 133 (NKID).

It belongs to the TRAFAC class translation factor GTPase superfamily. Classic translation factor GTPase family. LepA subfamily.

It is found in the cell inner membrane. It carries out the reaction GTP + H2O = GDP + phosphate + H(+). Its function is as follows. Required for accurate and efficient protein synthesis under certain stress conditions. May act as a fidelity factor of the translation reaction, by catalyzing a one-codon backward translocation of tRNAs on improperly translocated ribosomes. Back-translocation proceeds from a post-translocation (POST) complex to a pre-translocation (PRE) complex, thus giving elongation factor G a second chance to translocate the tRNAs correctly. Binds to ribosomes in a GTP-dependent manner. In Nitratiruptor sp. (strain SB155-2), this protein is Elongation factor 4.